Reading from the N-terminus, the 95-residue chain is MLFTVSHSPYHCDLSALLRLVTSEDAILFLQDGVMAVLKNSESLNLLLNNQASLFVLEDDVIARGLCGQISDSAMLIGYTHFVDLTLKHQQQLAW.

The protein belongs to the DsrH/TusB family. In terms of assembly, heterohexamer, formed by a dimer of trimers. The hexameric TusBCD complex contains 2 copies each of TusB, TusC and TusD. The TusBCD complex interacts with TusE.

The protein localises to the cytoplasm. Part of a sulfur-relay system required for 2-thiolation of 5-methylaminomethyl-2-thiouridine (mnm(5)s(2)U) at tRNA wobble positions. This chain is Protein TusB, found in Yersinia enterocolitica serotype O:8 / biotype 1B (strain NCTC 13174 / 8081).